A 596-amino-acid polypeptide reads, in one-letter code: Probable translation initiation factor IF-2 (596 aa).

Residues 3–220 (IRSPIVSVLG…MLLGLAQEYL (218 aa)) enclose the tr-type G domain. The interval 12 to 19 (GHVDHGKT) is G1. GTP is bound at residue 12 to 19 (GHVDHGKT). Residues 37–41 (GITQH) form a G2 region. Residues 76-79 (DTPG) form a G3 region. GTP contacts are provided by residues 76–80 (DTPGH) and 130–133 (NKID). The G4 stretch occupies residues 130-133 (NKID). Positions 198–200 (SAK) are G5.

This sequence belongs to the TRAFAC class translation factor GTPase superfamily. Classic translation factor GTPase family. IF-2 subfamily.

In terms of biological role, function in general translation initiation by promoting the binding of the formylmethionine-tRNA to ribosomes. Seems to function along with eIF-2. In Methanobrevibacter smithii (strain ATCC 35061 / DSM 861 / OCM 144 / PS), this protein is Probable translation initiation factor IF-2.